Here is a 75-residue protein sequence, read N- to C-terminus: U6-lycotoxin-Ls1g (75 aa).

The first 21 residues, 1–21, serve as a signal peptide directing secretion; it reads MKLLLFTALVLVVISLIEVEA. The propeptide occupies 22-25; the sequence is ENER.

The protein belongs to the neurotoxin 19 (CSTX) family. 06 (U6-Lctx) subfamily. In terms of processing, contains 4 disulfide bonds. As to expression, expressed by the venom gland.

It localises to the secreted. The protein is U6-lycotoxin-Ls1g of Lycosa singoriensis (Wolf spider).